A 93-amino-acid polypeptide reads, in one-letter code: Large ribosomal subunit protein bL27 (93 aa).

A propeptide spanning residues 1 to 10 (MLLKLQIQLF) is cleaved from the precursor.

The protein belongs to the bacterial ribosomal protein bL27 family. The N-terminus is cleaved by ribosomal processing cysteine protease Prp.

This is Large ribosomal subunit protein bL27 from Phytoplasma australiense.